Here is a 432-residue protein sequence, read N- to C-terminus: uncharacterized protein (432 aa).

Disordered regions lie at residues 37–61 (DGIG…SADC), 127–151 (RDHD…DTRY), and 298–378 (SVSS…NHQC). Over residues 312–335 (DSSTLANTQGFREDQSQQQHTPSP) the composition is skewed to polar residues. Low complexity predominate over residues 341 to 366 (SSLSHQFHQSIHQSHQHHQSIYQSQH).

This is an uncharacterized protein from Arabidopsis thaliana (Mouse-ear cress).